Consider the following 215-residue polypeptide: Cytochrome b6 (215 aa).

A helical membrane pass occupies residues 32 to 52 (IFYCLGGITLTCFLVQVATGF). Cys35 serves as a coordination point for heme c. Residues His86 and His100 each coordinate heme b. The next 3 helical transmembrane spans lie at 90 to 110 (ASMM…TGGF), 116 to 136 (LTWV…VTGY), and 186 to 206 (LHTF…FLMI). Heme b is bound by residues His187 and His202.

Belongs to the cytochrome b family. PetB subfamily. In terms of assembly, the 4 large subunits of the cytochrome b6-f complex are cytochrome b6, subunit IV (17 kDa polypeptide, PetD), cytochrome f and the Rieske protein, while the 4 small subunits are PetG, PetL, PetM and PetN. The complex functions as a dimer. Heme b serves as cofactor. Heme c is required as a cofactor.

It localises to the plastid. It is found in the chloroplast thylakoid membrane. Its function is as follows. Component of the cytochrome b6-f complex, which mediates electron transfer between photosystem II (PSII) and photosystem I (PSI), cyclic electron flow around PSI, and state transitions. In Nicotiana tabacum (Common tobacco), this protein is Cytochrome b6.